Consider the following 64-residue polypeptide: Large ribosomal subunit protein uL30 (64 aa).

It belongs to the universal ribosomal protein uL30 family. As to quaternary structure, part of the 50S ribosomal subunit.

This chain is Large ribosomal subunit protein uL30, found in Rhodopseudomonas palustris (strain BisA53).